A 204-amino-acid chain; its full sequence is Large ribosomal subunit protein uL4 (204 aa).

A disordered region spans residues Thr49–Ser75.

Belongs to the universal ribosomal protein uL4 family. In terms of assembly, part of the 50S ribosomal subunit.

Functionally, one of the primary rRNA binding proteins, this protein initially binds near the 5'-end of the 23S rRNA. It is important during the early stages of 50S assembly. It makes multiple contacts with different domains of the 23S rRNA in the assembled 50S subunit and ribosome. In terms of biological role, forms part of the polypeptide exit tunnel. In Campylobacter jejuni subsp. jejuni serotype O:23/36 (strain 81-176), this protein is Large ribosomal subunit protein uL4.